The chain runs to 447 residues: Elongation factor 1-alpha (447 aa).

The region spanning 5-230 (KTHINIVVIG…DQINEPKRPS (226 aa)) is the tr-type G domain. The segment at 14-21 (GHVDSGKS) is G1. 14–21 (GHVDSGKS) provides a ligand contact to GTP. Position 55 is an N6,N6-dimethyllysine (K55). The G2 stretch occupies residues 70 to 74 (GITID). K79 is modified (N6,N6,N6-trimethyllysine). Residues 91 to 94 (DAPG) are G3. GTP is bound by residues 91 to 95 (DAPGH) and 153 to 156 (NKMD). Residues 153–156 (NKMD) are G4. Residue K187 is modified to N6,N6,N6-trimethyllysine. Residues 194-196 (SGF) are G5. At K261 the chain carries N6-methyllysine. E289 bears the 5-glutamyl glycerylphosphorylethanolamine mark. N6,N6,N6-trimethyllysine is present on K306. Residue E362 is modified to 5-glutamyl glycerylphosphorylethanolamine. Residue K396 is modified to N6,N6,N6-trimethyllysine.

It belongs to the TRAFAC class translation factor GTPase superfamily. Classic translation factor GTPase family. EF-Tu/EF-1A subfamily.

It is found in the cytoplasm. Its function is as follows. This protein promotes the GTP-dependent binding of aminoacyl-tRNA to the A-site of ribosomes during protein biosynthesis. The polypeptide is Elongation factor 1-alpha (REFA1) (Oryza sativa subsp. japonica (Rice)).